Here is a 164-residue protein sequence, read N- to C-terminus: GTP-dependent dephospho-CoA kinase (164 aa).

GTP is bound by residues D40, V41, V42, D59, K61, and E113.

This sequence belongs to the GTP-dependent DPCK family.

It catalyses the reaction 3'-dephospho-CoA + GTP = GDP + CoA + H(+). Its pathway is cofactor biosynthesis; coenzyme A biosynthesis. Catalyzes the GTP-dependent phosphorylation of the 3'-hydroxyl group of dephosphocoenzyme A to form coenzyme A (CoA). In Sulfolobus acidocaldarius (strain ATCC 33909 / DSM 639 / JCM 8929 / NBRC 15157 / NCIMB 11770), this protein is GTP-dependent dephospho-CoA kinase.